The chain runs to 113 residues: uncharacterized protein (113 aa).

This is an uncharacterized protein from Escherichia coli O6:H1 (strain CFT073 / ATCC 700928 / UPEC).